Consider the following 42-residue polypeptide: Photosystem I reaction center subunit IX (42 aa).

The chain crosses the membrane as a helical span at residues 7–27; that stretch reads YLSTAPVLATIWFIILAGLLI.

This sequence belongs to the PsaJ family.

Its subcellular location is the plastid. It is found in the chloroplast thylakoid membrane. Its function is as follows. May help in the organization of the PsaE and PsaF subunits. The polypeptide is Photosystem I reaction center subunit IX (Mesostigma viride (Green alga)).